The sequence spans 473 residues: H(+)/Cl(-) exchange transporter ClcA (473 aa).

The Cytoplasmic segment spans residues 1–32 (MKTDTPSLETPQAARLRRRQLIRQLLERDKTP). Residues 33 to 69 (LAILFMAAVVGTLVGLAAVAFDKGVAWLQNQRMGALV) traverse the membrane as a helical segment. The Periplasmic segment spans residues 70-76 (HTADNYP). The helical transmembrane segment at 77–100 (LLLTVAFLCSAVLAMFGYFLVRKY) threads the bilayer. Residues 106-110 (GSGIP) carry the Selectivity filter part_1 motif. Ser107 is a binding site for chloride. The segment at residues 109–116 (IPEIEGAL) is an intramembrane region (helical). Topologically, residues 117-123 (EDQRPVR) are cytoplasmic. The next 2 helical transmembrane spans lie at 124 to 141 (WWRV…TLGG) and 148 to 166 (EGPT…LDVF). Residues 146 to 150 (GREGP) carry the Selectivity filter part_2 motif. Topologically, residues 167–176 (RLKGDEARHT) are cytoplasmic. 2 intramembrane regions (helical) span residues 177 to 189 (LLAT…LAAA) and 193 to 201 (PLAGILFII). Topologically, residues 202–214 (EEMRPQFRYTLIS) are cytoplasmic. The chain crosses the membrane as a helical span at residues 215-232 (IKAVFIGVIMSTIMYRIF). Topologically, residues 233 to 252 (NHEVALIDVGKLSDAPLNTL) are periplasmic. The helical transmembrane segment at 253–281 (WLYLILGIIFGIFGPIFNKWVLGMQDLLH) threads the bilayer. At 282-287 (RVHGGN) the chain is on the cytoplasmic side. The chain crosses the membrane as a helical span at residues 288–309 (ITKWVLMGGAIGGLCGLLGFVA). Over 310–329 (PATSGGGFNLIPIATAGNFS) the chain is Periplasmic. A run of 2 helical transmembrane segments spans residues 330–349 (MGML…LCFS) and 355–376 (GIFA…MVAV). Positions 355–359 (GIFAP) match the Selectivity filter part_3 motif. Chloride-binding residues include Ile356 and Phe357. Residues 377–386 (ELFPQYHLEA) lie on the Periplasmic side of the membrane. An intramembrane region (helical) is located at residues 387–401 (GTFAIAGMGALLAAS). The segment at residues 402–404 (IRA) is an intramembrane region (note=Loop between two helices). An intramembrane region (helical) is located at residues 405 to 416 (PLTGIILVLEMT). The segment at residues 417 to 421 (DNYQL) is an intramembrane region (note=Loop between two helices). The chain crosses the membrane as a helical span at residues 422–438 (ILPMIITGLGATLLAQF). Topologically, residues 439–473 (TGGKPLYSAILARTLAKQEAEQLARSKAASARENT) are cytoplasmic. Position 445 (Tyr445) interacts with chloride.

Belongs to the chloride channel (TC 2.A.49) family. ClcA subfamily. As to quaternary structure, homodimer.

The protein localises to the cell inner membrane. It catalyses the reaction 2 chloride(in) + H(+)(out) = 2 chloride(out) + H(+)(in). Functionally, proton-coupled chloride transporter. Functions as antiport system and exchanges two chloride ions for 1 proton. Probably acts as an electrical shunt for an outwardly-directed proton pump that is linked to amino acid decarboxylation, as part of the extreme acid resistance (XAR) response. The protein is H(+)/Cl(-) exchange transporter ClcA of Escherichia coli O45:K1 (strain S88 / ExPEC).